Reading from the N-terminus, the 603-residue chain is uncharacterized protein (603 aa).

The disordered stretch occupies residues 257-281 (AGEAASSDHDQKISRVTRKRPREPK).

This is an uncharacterized protein from Saccharomyces cerevisiae (strain ATCC 204508 / S288c) (Baker's yeast).